The following is a 1021-amino-acid chain: Probable LRR receptor-like serine/threonine-protein kinase RFK1 (1021 aa).

Positions 1–39 (MISLYQILAEKKKKKKNDLNIFAFSVFAIICFKFYSVNA) are cleaved as a signal peptide. Topologically, residues 41–625 (KLPQQEVDAL…PKTGMSPGAY (585 aa)) are extracellular. An N-linked (GlcNAc...) asparagine glycan is attached at Asn-96. 2 LRR repeats span residues 99-122 (DCHVVKFAFKDHNLPGTLPQIVKL) and 123-146 (PYLREIDLAYNYINGTLPREWASS). N-linked (GlcNAc...) asparagine glycans are attached at residues Asn-136, Asn-147, and Asn-168. LRR repeat units lie at residues 148-168 (LTFISLLVNRLSGEIPKEFGN), 169-192 (SSLTYLDLESNAFSGTIPQELGNL), 193-216 (VHLKKLLLSSNKLTGTLPASLARL), 218-240 (NMTDFRINDLQLSGTIPSYIQNW), and 241-266 (KQLERLEMIASGLTGPIPSVISVLSN). Asn-218 carries N-linked (GlcNAc...) asparagine glycosylation. N-linked (GlcNAc...) asparagine glycosylation is found at Asn-287 and Asn-300. 4 LRR repeats span residues 288-312 (VTGLTKIILKNCNISGQIPTYLSHL), 313-336 (KELETLDLSFNKLVGGIPSFAQAE), 338-359 (LRFIILAGNMLEGDAPDELLRD), and 361-381 (ITVDLSYNNLKWQSPESRACR). Residues Asn-486 and Asn-512 are each glycosylated (N-linked (GlcNAc...) asparagine). Residues 626–646 (IAIGIGAPCLIIFILGFLWIC) traverse the membrane as a helical segment. The Cytoplasmic portion of the chain corresponds to 647-1021 (GCLPRCGRQR…QERKKEESRP (375 aa)). The residue at position 670 (Thr-670) is a Phosphothreonine. The region spanning 681 to 956 (FNPTNKIGEG…EVVAMLEGLY (276 aa)) is the Protein kinase domain. Residues 687–695 (IGEGGFGAV) and Lys-709 each bind ATP. Tyr-754 carries the phosphotyrosine modification. The Proton acceptor role is filled by Asp-807. Residue Ser-840 is modified to Phosphoserine. Thr-841 and Thr-846 each carry phosphothreonine. Phosphotyrosine is present on Tyr-854. The segment at 985-1021 (ENNSKTQCSVKSYPSSSSTSSGAGQAVQERKKEESRP) is disordered. The segment covering 993–1005 (SVKSYPSSSSTSS) has biased composition (low complexity). Over residues 1012 to 1021 (QERKKEESRP) the composition is skewed to basic and acidic residues.

This sequence belongs to the protein kinase superfamily. Ser/Thr protein kinase family. As to expression, mostly expressed in flower buds, especially in stamens.

It localises to the membrane. It carries out the reaction L-seryl-[protein] + ATP = O-phospho-L-seryl-[protein] + ADP + H(+). The catalysed reaction is L-threonyl-[protein] + ATP = O-phospho-L-threonyl-[protein] + ADP + H(+). In Arabidopsis thaliana (Mouse-ear cress), this protein is Probable LRR receptor-like serine/threonine-protein kinase RFK1 (RKF1).